A 393-amino-acid chain; its full sequence is Metal tolerance protein C2 (393 aa).

A disordered region spans residues 1-23 (MERSISFNPRGDNELPDDRSSDV). At 1-113 (MERSISFNPR…VTSGNRQMKR (113 aa)) the chain is on the cytoplasmic side. Residues 11 to 21 (GDNELPDDRSS) are compositionally biased toward basic and acidic residues. Residues 114–134 (LFLLIALNVLYSTTELSIGIF) traverse the membrane as a helical segment. Residues 135–139 (TGRVG) lie on the Vacuolar side of the membrane. The helical transmembrane segment at 140-160 (LVSDAFHLTFGCGLLTFSLFA) threads the bilayer. The Cytoplasmic segment spans residues 161–186 (MATSRKKPDHAYSYGYKRLEVLSAFT). A helical membrane pass occupies residues 187–207 (NALFLMFMSFSLAVEALHAFI). Residues 208-214 (QDESEHK) are Vacuolar-facing. A helical membrane pass occupies residues 215-235 (HYLIVSAVTNLLVNLLGVWFF). The Cytoplasmic segment spans residues 236–259 (RNYARVNIAYRKAEDMNYHSVCLH). The helical transmembrane segment at 260–280 (VISDSIRSAGLILASWLLSLG) threads the bilayer. Over 281-283 (VEN) the chain is Vacuolar. Residues 284-304 (AEVLCLGLVSVTVFMLVMPLF) traverse the membrane as a helical segment. Residues 305–393 (KATGGVLLQM…QDLTLQTDYT (89 aa)) lie on the Cytoplasmic side of the membrane.

Belongs to the cation diffusion facilitator (CDF) transporter (TC 2.A.4) family.

The protein resides in the vacuole membrane. Its function is as follows. Involved in sequestration of excess metal in the cytoplasm into vacuoles to maintain metal homeostasis. In Arabidopsis thaliana (Mouse-ear cress), this protein is Metal tolerance protein C2 (MTPC2).